The primary structure comprises 278 residues: Manganese import system permease protein ScaB (278 aa).

Transmembrane regions (helical) follow at residues 18-38, 40-60, 61-81, 136-156, 172-192, 194-214, 220-240, and 244-264; these read ALIT…FIIL, GMSL…ALSF, ILGI…SILI, VTIG…RPLL, VKLY…TAMQ, VGTI…YLYA, MMLL…FIGY, and IAVG…SFFI.

The protein belongs to the ABC-3 integral membrane protein family.

The protein resides in the cell membrane. Functionally, part of an ABC transporter complex involved in manganese import. The sequence is that of Manganese import system permease protein ScaB from Streptococcus pneumoniae.